The chain runs to 1079 residues: Eukaryotic translation initiation factor 5B (1079 aa).

The interval 1-478 is disordered; sequence MGKKGKKSGY…QAAPAESNVS (478 aa). Residues 22 to 38 are compositionally biased toward polar residues; it reads SGQNEYLDNTSQDSPQN. The span at 57–67 shows a compositional bias: basic residues; the sequence is SKKKKGKKNKG. 3 positions are modified to phosphoserine: Ser-73, Ser-77, and Ser-82. The segment covering 105–114 has biased composition (basic residues); the sequence is KKGKKGKKSK. Ser-127 is subject to Phosphoserine. A compositionally biased stretch (low complexity) spans 160 to 169; the sequence is NNNESEAAAP. Over residues 173–192 the composition is skewed to basic and acidic residues; that stretch reads PEVRVKTKKEKEREKKEREK. Basic residues predominate over residues 193 to 204; sequence LRKKQQQAKKKG. Polar residues predominate over residues 207 to 233; the sequence is GEDTLASSEVSSEVDISTPAENDSSAK. Residues 253–293 are compositionally biased toward basic and acidic residues; sequence MLEEKRAREEEEQRIREEEARIAEEEKRLAEVEEARKEEAR. 2 stretches are compositionally biased toward low complexity: residues 321–334 and 361–376; these read QQALAQRRLQQMLE and RSGTSSISSSGILESS. The residue at position 364 (Thr-364) is a Phosphothreonine. A compositionally biased stretch (basic and acidic residues) spans 385–408; it reads EPQKDSKDDSEKVEKETEVERKEE. Residues 409–431 show a composition bias toward acidic residues; it reads NEAEAEAVFDDWEAALEEPEVAE. Residues 436–466 show a composition bias toward basic and acidic residues; that stretch reads VTEKKETDIKSDAVEHSIKDKEDSKTDKVDD. One can recognise a tr-type G domain in the interval 482–700; sequence LRSPICCILG…LISLTQTRMS (219 aa). A G1 region spans residues 491-498; sequence GHVDTGKT. GTP is bound at residue 491–498; the sequence is GHVDTGKT. A G2 region spans residues 516–520; the sequence is GITQQ. The segment at 555 to 558 is G3; the sequence is DTPG. Residues 609–612 form a G4 region; sequence NKVD. The tract at residues 677–679 is G5; it reads SAQ.

The protein belongs to the TRAFAC class translation factor GTPase superfamily. Classic translation factor GTPase family. IF-2 subfamily. The cofactor is a monovalent cation.

It localises to the cytoplasm. It catalyses the reaction GTP + H2O = GDP + phosphate + H(+). Plays a role in translation initiation. Translational GTPase that catalyzes the joining of the 40S and 60S subunits to form the 80S initiation complex with the initiator methionine-tRNA in the P-site base paired to the start codon. GTP binding and hydrolysis induces conformational changes in the enzyme that renders it active for productive interactions with the ribosome. The release of the enzyme after formation of the initiation complex is a prerequisite to form elongation-competent ribosomes. In Schizosaccharomyces pombe (strain 972 / ATCC 24843) (Fission yeast), this protein is Eukaryotic translation initiation factor 5B.